The sequence spans 220 residues: Deoxyribose-phosphate aldolase (220 aa).

The active-site Proton donor/acceptor is the aspartate 89. The active-site Schiff-base intermediate with acetaldehyde is lysine 151. Lysine 180 functions as the Proton donor/acceptor in the catalytic mechanism.

This sequence belongs to the DeoC/FbaB aldolase family. DeoC type 1 subfamily.

It is found in the cytoplasm. The catalysed reaction is 2-deoxy-D-ribose 5-phosphate = D-glyceraldehyde 3-phosphate + acetaldehyde. Its pathway is carbohydrate degradation; 2-deoxy-D-ribose 1-phosphate degradation; D-glyceraldehyde 3-phosphate and acetaldehyde from 2-deoxy-alpha-D-ribose 1-phosphate: step 2/2. Catalyzes a reversible aldol reaction between acetaldehyde and D-glyceraldehyde 3-phosphate to generate 2-deoxy-D-ribose 5-phosphate. In Lactococcus lactis subsp. cremoris (strain SK11), this protein is Deoxyribose-phosphate aldolase.